The primary structure comprises 594 residues: UvrABC system protein C (594 aa).

One can recognise a GIY-YIG domain in the interval L17–I94. The UVR domain occupies K199–L234.

It belongs to the UvrC family. In terms of assembly, interacts with UvrB in an incision complex.

The protein localises to the cytoplasm. Its function is as follows. The UvrABC repair system catalyzes the recognition and processing of DNA lesions. UvrC both incises the 5' and 3' sides of the lesion. The N-terminal half is responsible for the 3' incision and the C-terminal half is responsible for the 5' incision. The protein is UvrABC system protein C of Staphylococcus epidermidis (strain ATCC 35984 / DSM 28319 / BCRC 17069 / CCUG 31568 / BM 3577 / RP62A).